The primary structure comprises 456 residues: Solute carrier family 49 member 4 homolog (456 aa).

Topologically, residues 1–29 (MGLEWSSPGERQPLLFPGGPRSPRVFGRR) are cytoplasmic. The Di-leucine motif; mediates lysosomal localization motif lies at 14–15 (LL). A helical membrane pass occupies residues 30–50 (WLVLLLFSVLAFLQGLVWNSW). Residues 51–67 (GPIQISARTAYKFSGLD) lie on the Lumenal side of the membrane. The helical transmembrane segment at 68 to 88 (IALLVLWGPIGFLPCFLFMWL) threads the bilayer. Residues 89 to 95 (MDNRGLR) lie on the Cytoplasmic side of the membrane. The helical transmembrane segment at 96 to 116 (ITVLLTALLMVLGAGLRCVPV) threads the bilayer. Topologically, residues 117 to 123 (EDLAIRR) are lumenal. The helical transmembrane segment at 124–144 (ILIHGGQLLNGFAGPTVMNAA) threads the bilayer. At 145–162 (PFLSTTWFAPDERATATA) the chain is on the cytoplasmic side. The chain crosses the membrane as a helical span at residues 163–183 (IASMLNYLGGACAFLVGPLVV). Topologically, residues 184–207 (PAPNSTSGLLLYSGSTDAIKDRIE) are lumenal. An N-linked (GlcNAc...) asparagine glycan is attached at Asn-187. A helical transmembrane segment spans residues 208 to 228 (AVMYAEFGIIFVVFAAILAYF). Over 229–259 (PARPPVPPSVAAASRRLSYRTSIFRLLSNLR) the chain is Cytoplasmic. The chain crosses the membrane as a helical span at residues 260–280 (FLLIVLAYAIPLGFYSGWIGV). The Lumenal segment spans residues 281 to 292 (LDLILTPVHVTQ). The chain crosses the membrane as a helical span at residues 293–313 (VDAGWVGFWSIVGGCVVGIAV). Over 314–326 (GRFADSIRGVLKP) the chain is Cytoplasmic. The chain crosses the membrane as a helical span at residues 327–347 (ILLLLFSGATLSATWFTLTFL). Residues 348 to 362 (SNVTHLPLTTATLYT) are Lumenal-facing. Asn-349 carries N-linked (GlcNAc...) asparagine glycosylation. The helical transmembrane segment at 363–383 (SCILIGVFLNGTVPIFFELFV) threads the bilayer. Residues 384–392 (ETVYPIPEG) lie on the Cytoplasmic side of the membrane. Residues 393 to 413 (IACGVVTFLSNIFMGVLLVFL) form a helical membrane-spanning segment. The Lumenal segment spans residues 414 to 420 (TMYQMEL). Residues 421-441 (SWLNWCLTGSCFLSLFFIACF) traverse the membrane as a helical segment. Residues 442–456 (RESYDRLYLDVFVSV) are Cytoplasmic-facing.

The protein belongs to the major facilitator superfamily.

The protein resides in the lysosome membrane. It catalyses the reaction pyridoxine(out) + n H(+)(out) = pyridoxine(in) + n H(+)(in). Its function is as follows. Mediates H(+)-dependent pyridoxine transport. This Xenopus laevis (African clawed frog) protein is Solute carrier family 49 member 4 homolog (slc49a4).